Reading from the N-terminus, the 343-residue chain is Aspartate carbamoyltransferase catalytic subunit (343 aa).

2 residues coordinate carbamoyl phosphate: Arg54 and Thr55. Lys82 lines the L-aspartate pocket. Residues Arg104, His134, and Gln137 each coordinate carbamoyl phosphate. The L-aspartate site is built by Arg177 and Arg232. 2 residues coordinate carbamoyl phosphate: Gly277 and Pro278. The tract at residues 323 to 343 (PDQSNPQRNVTNTSNWQETKR) is disordered.

The protein belongs to the aspartate/ornithine carbamoyltransferase superfamily. ATCase family. As to quaternary structure, heterododecamer (2C3:3R2) of six catalytic PyrB chains organized as two trimers (C3), and six regulatory PyrI chains organized as three dimers (R2).

It catalyses the reaction carbamoyl phosphate + L-aspartate = N-carbamoyl-L-aspartate + phosphate + H(+). Its pathway is pyrimidine metabolism; UMP biosynthesis via de novo pathway; (S)-dihydroorotate from bicarbonate: step 2/3. Functionally, catalyzes the condensation of carbamoyl phosphate and aspartate to form carbamoyl aspartate and inorganic phosphate, the committed step in the de novo pyrimidine nucleotide biosynthesis pathway. This Renibacterium salmoninarum (strain ATCC 33209 / DSM 20767 / JCM 11484 / NBRC 15589 / NCIMB 2235) protein is Aspartate carbamoyltransferase catalytic subunit.